Reading from the N-terminus, the 709-residue chain is Polyribonucleotide nucleotidyltransferase (709 aa).

2 residues coordinate Mg(2+): Asp-489 and Asp-495. Residues 556-615 (PKIDMIKIDVDKIKVVIGKGGETIDKIIAETGVKIDIDEEGNVSIFSSDQAAIDRTKDII) enclose the KH domain. An S1 motif domain is found at 625–693 (GEVYHAKVVR…DKGRVDASMK (69 aa)).

The protein belongs to the polyribonucleotide nucleotidyltransferase family. It depends on Mg(2+) as a cofactor.

It localises to the cytoplasm. It catalyses the reaction RNA(n+1) + phosphate = RNA(n) + a ribonucleoside 5'-diphosphate. Its function is as follows. Involved in mRNA degradation. Catalyzes the phosphorolysis of single-stranded polyribonucleotides processively in the 3'- to 5'-direction. In Streptococcus agalactiae serotype Ia (strain ATCC 27591 / A909 / CDC SS700), this protein is Polyribonucleotide nucleotidyltransferase.